We begin with the raw amino-acid sequence, 156 residues long: Peptide methionine sulfoxide reductase MsrA (156 aa).

Residue Cys10 is part of the active site.

It belongs to the MsrA Met sulfoxide reductase family.

It carries out the reaction L-methionyl-[protein] + [thioredoxin]-disulfide + H2O = L-methionyl-(S)-S-oxide-[protein] + [thioredoxin]-dithiol. The enzyme catalyses [thioredoxin]-disulfide + L-methionine + H2O = L-methionine (S)-S-oxide + [thioredoxin]-dithiol. In terms of biological role, has an important function as a repair enzyme for proteins that have been inactivated by oxidation. Catalyzes the reversible oxidation-reduction of methionine sulfoxide in proteins to methionine. The chain is Peptide methionine sulfoxide reductase MsrA from Metamycoplasma arthritidis (strain 158L3-1) (Mycoplasma arthritidis).